Here is a 249-residue protein sequence, read N- to C-terminus: Proteasome subunit alpha type-7-1 (249 aa).

At S177 the chain carries Phosphoserine.

This sequence belongs to the peptidase T1A family. The 26S proteasome consists of a 20S proteasome core and two 19S regulatory subunits. The 20S proteasome core is composed of 28 subunits that are arranged in four stacked rings, resulting in a barrel-shaped structure. The two end rings are each formed by seven alpha subunits, and the two central rings are each formed by seven beta subunits. The catalytic chamber with the active sites is on the inside of the barrel. Interacts with PI31; this interaction is reduced by PI31 ADP-ribosylation.

It is found in the cytoplasm. The protein resides in the nucleus. Its function is as follows. The proteasome is a multicatalytic proteinase complex which is characterized by its ability to cleave peptides with Arg, Phe, Tyr, Leu, and Glu adjacent to the leaving group at neutral or slightly basic pH. The proteasome has an ATP-dependent proteolytic activity. This is Proteasome subunit alpha type-7-1 (Prosalpha4) from Drosophila melanogaster (Fruit fly).